A 124-amino-acid chain; its full sequence is Aspartate 1-decarboxylase (124 aa).

The active-site Schiff-base intermediate with substrate; via pyruvic acid is Ser-25. The residue at position 25 (Ser-25) is a Pyruvic acid (Ser). Thr-57 is a substrate binding site. Tyr-58 (proton donor) is an active-site residue. Residue 73-75 (GAA) participates in substrate binding.

The protein belongs to the PanD family. In terms of assembly, heterooctamer of four alpha and four beta subunits. Pyruvate is required as a cofactor. Is synthesized initially as an inactive proenzyme, which is activated by self-cleavage at a specific serine bond to produce a beta-subunit with a hydroxyl group at its C-terminus and an alpha-subunit with a pyruvoyl group at its N-terminus.

Its subcellular location is the cytoplasm. The enzyme catalyses L-aspartate + H(+) = beta-alanine + CO2. It participates in cofactor biosynthesis; (R)-pantothenate biosynthesis; beta-alanine from L-aspartate: step 1/1. Catalyzes the pyruvoyl-dependent decarboxylation of aspartate to produce beta-alanine. This is Aspartate 1-decarboxylase from Clostridium beijerinckii (strain ATCC 51743 / NCIMB 8052) (Clostridium acetobutylicum).